Consider the following 1029-residue polypeptide: Protein STABILIZED1 (1029 aa).

The 85-residue stretch at Met-1 to Gly-85 folds into the Ubiquitin-like domain. Gly-85 participates in a covalent cross-link: Glycyl lysine isopeptide (Gly-Lys) (interchain with K-? in acceptor proteins). Residues Ala-142–Asp-170 form a disordered region. Positions Asp-210–Lys-243 form a coiled coil. 15 HAT repeats span residues Tyr-367–Val-399, Gly-401–Ala-431, Asn-432–His-462, Asp-463–Glu-494, Asp-496–Tyr-524, Glu-526–Ala-554, Gly-639–Ser-671, Gly-673–Leu-705, Gly-707–Glu-739, Lys-741–Glu-772, Gly-774–Arg-806, Lys-808–Lys-840, Asn-842–Arg-874, Asp-876–Arg-908, and Lys-940–Gln-972. The stretch at Lys-625–Lys-658 is one TPR 1 repeat. Residues Phe-794 to Cys-827 form a TPR 2 repeat. Residues Pro-926 to Ile-959 form a TPR 3 repeat.

In terms of assembly, component of a pre-mRNA splicing complex. Interacts with ZOP1. Interacts with PRP31. In terms of tissue distribution, ubiquitous.

Its subcellular location is the nucleus. It localises to the cajal body. Functionally, pre-mRNA splicing factor required for splicing and for the turnover of unstable transcripts. May be a U5 snRNP-associated protein involved in the formation of U4/U6-U5 tri-snRNP. Involved in responses to abiotic stresses. Involved in microRNAs (miRNAs) biogenesis by functioning in primary miRNAs (pri-miRNAs) splicing. Required for DNA methylation and transcriptional silencing through the RNA-directed DNA methylation (RdDM) pathway. The polypeptide is Protein STABILIZED1 (STA1) (Arabidopsis thaliana (Mouse-ear cress)).